A 948-amino-acid chain; its full sequence is Zinc finger CCCH domain-containing protein 3 (948 aa).

Disordered stretches follow at residues 25–108 (HGNA…VPQQ), 121–219 (QNVV…RRTV), 265–296 (VDAGHTDQPVPSGSVGGPARPASGPRQAREAS), and 336–493 (NVCK…LKKT). Over residues 56 to 74 (RPSRRGYSSHHGPSWRKKY) the composition is skewed to basic residues. Residues 128-141 (KPPSKSGSASASGA) are compositionally biased toward low complexity. A compositionally biased stretch (basic and acidic residues) spans 157 to 166 (QRPREGEGEP). The span at 372 to 398 (SAPSKYKWKASSPSASSSSSFRWQSEA) shows a compositional bias: low complexity. A compositionally biased stretch (polar residues) spans 405 to 415 (SQLSPVLSRSP). A Phosphoserine modification is found at S408. The span at 441–452 (VKSRTKIIRRRS) shows a compositional bias: basic residues. C3H1-type zinc fingers lie at residues 667–695 (EKRKEYCMYYNRFGRCNRGERCPYIHDPE), 699–722 (VCTRFVRGTCKKTDGTCPFSHHVS), 723–749 (KEKMPVCSYFLKGICSNSNCPYSHVYV), 750–777 (SRKAEVCSDFLKGYCPLGAKCKKKHTLL), and 778–800 (CPDFARRGACPRGAQCQLLHRTQ). Disordered stretches follow at residues 798-891 (RTQK…HEAP) and 913-948 (ISLQSSPSPGAQPRVRAPRAPLTKDSGKPLHIKPRL). Polar residues predominate over residues 834–846 (SASQRPTRQTPSS). Low complexity-rich tracts occupy residues 847–856 (AALTAAAVAA) and 864–885 (SASPSSSKASSSSSSSSSPPAS). Phosphoserine is present on residues S918 and S920.

In terms of assembly, interacts with SMAD1, SMAD3, SMAD4, CPSF2 and CPSF3.

The protein resides in the nucleus. Required for the export of polyadenylated mRNAs from the nucleus. Enhances ACVR1B-induced SMAD-dependent transcription. Binds to single-stranded DNA but not to double-stranded DNA in vitro. Involved in RNA cleavage. The polypeptide is Zinc finger CCCH domain-containing protein 3 (ZC3H3) (Homo sapiens (Human)).